The primary structure comprises 569 residues: MITVAAPEAQPQVAAAVDEAPPEAVTVFRSKLPDIDIPSHLPLHEYCFARAAELPDAPCLIAAATGRTYTFAETRLLCRRAAAALHRLGVGHGDRVMVLLQNCVEFAVAFFAASFLGAVTTAANPFCTPQEIHKQFKASGVKLILTQSVYVDKLRQHEAFPRIDACTVGDDTLTVITIDDDEATPEGCLPFWDLIADADEGSVPEVAISPDDPVALPFSSGTTGLPKGVVLTHRSVVSGVAQQVDGENPNLHMGAGDVALCVLPLFHIFSLNSVLLCAVRAGAAVALMPRFEMGAMLGAIERWRVTVAAVVPPLVLALAKNPFVERHDLSSIRIVLSGAAPLGKELEDALRARLPQAIFGQGYGMTEAGPVLSMCPAFAKEPTPAKSGSCGTVVRNAELKVVDPDTGFSLGRNLPGEICIRGPQIMKGYLNDPEATAATIDVEGWLHTGDIGYVDDDDEVFIVDRVKELIKFKGFQVPPAELESLLIAHPSIADAAVVPQKDDVAGEVPVAFVVRAADSDITEESIKEFISKQVVFYKRLHKVHFIHAIPKSASGKILRRELRAKLAAC.

The ATP site is built by Ser219, Ser220, Gly221, Thr222, Thr223, and Lys227. Positions 269 and 273 each coordinate (E)-4-coumaroyl-AMP. Position 290 (Arg290) interacts with CoA. Residues 292 to 361 (EMGAMLGAIE…ARLPQAIFGQ (70 aa)) are SBD1. Positions 339, 361, 362, 366, and 374 each coordinate (E)-4-coumaroyl-AMP. Gln361, Gly362, and Thr366 together coordinate ATP. The interval 362–429 (GYGMTEAGPV…IRGPQIMKGY (68 aa)) is SBD2. 2 residues coordinate ATP: Asp450 and Arg465. The (E)-4-coumaroyl-AMP site is built by Lys467 and Lys471. Residues Lys473 and Gly474 each coordinate CoA. Residue Lys556 coordinates ATP.

The protein belongs to the ATP-dependent AMP-binding enzyme family. It depends on Mg(2+) as a cofactor. In terms of tissue distribution, expressed in roots, stems, leaf blades, leaf sheaths and spikelets.

It carries out the reaction (E)-ferulate + ATP + CoA = (E)-feruloyl-CoA + AMP + diphosphate. It catalyses the reaction (E)-4-coumarate + ATP + CoA = (E)-4-coumaroyl-CoA + AMP + diphosphate. The enzyme catalyses (E)-caffeate + ATP + CoA = (E)-caffeoyl-CoA + AMP + diphosphate. The catalysed reaction is (E)-cinnamate + ATP + CoA = (E)-cinnamoyl-CoA + AMP + diphosphate. It carries out the reaction (E)-ferulate + ATP + H(+) = (E)-feruloyl-AMP + diphosphate. It catalyses the reaction (E)-feruloyl-AMP + CoA = (E)-feruloyl-CoA + AMP + H(+). The enzyme catalyses (E)-4-coumarate + ATP + H(+) = (E)-4-coumaroyl-AMP + diphosphate. The catalysed reaction is (E)-4-coumaroyl-AMP + CoA = (E)-4-coumaroyl-CoA + AMP + H(+). It carries out the reaction (E)-caffeate + ATP + H(+) = (E)-caffeoyl-AMP + diphosphate. It catalyses the reaction (E)-caffeoyl-AMP + CoA = (E)-caffeoyl-CoA + AMP + H(+). The protein operates within phytoalexin biosynthesis; 3,4',5-trihydroxystilbene biosynthesis; 3,4',5-trihydroxystilbene from trans-4-coumarate: step 1/2. In terms of biological role, involved in the phenylpropanoid metabolism by mediating the activation of a number of hydroxycinnamates for the biosynthesis of monolignols and other phenolic secondary metabolites. Catalyzes the formation of CoA esters of cinnamate, 4-coumarate, caffeate and ferulate. Is more efficient with substrates in the following order: ferulate &gt; 4-coumarate &gt; caffeate &gt; cinnamate. Cannot convert sinapate to its corresponding CoA ester. Follows a two-step reaction mechanism, wherein the carboxylate substrate first undergoes adenylation by ATP, followed by a thioesterification in the presence of CoA to yield the final CoA thioester. In Oryza sativa subsp. japonica (Rice), this protein is 4-coumarate--CoA ligase 2.